A 1495-amino-acid chain; its full sequence is MDSVTKKTRQDGSEVTERQGGSSSGLKTSSHTGGSGVEKRSYTHSSGYVTSSGSGRLNSSSSGYRQTQSPSSTLTKSPGSTFERKTYVNRHATYEGSSSANSSPEFPRKEFASASTRGRSQSRESEIRVRLQSASPSGRWTELDDVKRLLKGSRSASCSPTRSSSSTLPIPKKAVVETKMVTESSQSVSGTYDTTILNTTLPPYTWSSTLPAGSSLGGYHNSMGQSSSLINAMSHSTGSVFGVPNNLAPSSHALNTGLSTSSTVFGVQNNLSPSSSALNASAASAAYGMKNTSQTNTMNSTGVSASAGGTILSSQGDDFLHKDCKFLLLEKENAPAKKEMELLVMTKDSGKVFSASSTGLNGGSFAEDTLKKEKQGLSSYAADTGLKSDANGGLKSAPTRDKATYAEIQNGGAGGAIGSAPSWCPCGSCCSWWKWLLGLLLAWLLLLGLLFGLIALAEEVRKLKSRVDNLEKINHSFLTVNQGNPYLEKDVSKVDFLHGVAPSSTFPFENEESVWLMVKSRLNKEIERGYFRGERGEPGMKGDMGLQGPKGDRGLPGVPGIPGPVGHQGPEGPKGQKGSMGDPGMEGPMGQRGREGLPGPRGEPGPPGFGEKGDRGAAGPPGPPGPPGSAGLKGPMGSPGPQGPPGPPGLQGFRGEAGLPGAKGEKGATGPPGPKGDQGEKGARGMTGEQGSRGIPGPPGEPGAKGPAGQAGRDGQPGERGEPGLMGMPGARGPPGPSGDTGEPGLTGPQGPPGLPGNPGRPGAKGEPGAPGKVISAEGSSTIALPGPPGPPGPIGPTGPPGVPGPVGPAGLPGQQGPRGEKGSAGEVVIETIKTEVSSLASQMLSDLQGRAGPPGPPGPPGESVQGLPGPRGPPGLPGPSGPPGRPGSSVSTSETFVSGPPGPPGPPGPKGDQGEPGPRGFTGEPGEPGLPGFSSHGGTVTMQGPPGPPGPPGPKGDAGVPGAPGIPGTSRGGSRQIQGPPGPPGPPGPPGPGGSSSQEIQQYVADYLKSDNVRHYLTGVQGPPGPPGPPGILTTADGKNFDFAELATRVMSYVTSSSDHYQSFASSVSTTSVLYQELLNMLQREEIRQYLVGPRGPPGPPGPGVDGMSLSLDYDELTRRFISYLTSSGMSIGLPGPPGPPGTPGISYSELTAYLRNSEFSGLVGPPGPAGPPGPPGIPGSSGISLEDISAYLQSVGYSSISGIQGPPGPPGPPGPPGFSGTGLLSYADITHSDEFRSELIQYLKSDEVRSYISGPPGPPGPRGPPGPKGDSGLVAGSMSSLYHDSLASERLHGGSIGAEGSHGGSLGASSSYGSSMSSSMSSYSASMGSDGSYGASVGSDGSFDGLLTAEESHRRSAGPGRSYSSSFTGSLDYNELARHVSENLQSRGILQDLMSYTGQGPPGPPGPPGPPGISRVFAAYGNVTEDLMDFFRTHGTVRGPPGEKGERGYPGPKGDPGPMGPPGRHGQRGPKGEKGEKGEQMYSGRRRRRSVGV.

The segment covering 1–17 has biased composition (basic and acidic residues); it reads MDSVTKKTRQDGSEVTE. The interval 1-138 is disordered; the sequence is MDSVTKKTRQ…VRLQSASPSG (138 aa). At 1–435 the chain is on the cytoplasmic side; it reads MDSVTKKTRQ…CGSCCSWWKW (435 aa). Residues 1 to 535 form a nonhelical region (NC16) region; the sequence is MDSVTKKTRQ…IERGYFRGER (535 aa). The segment covering 19–32 has biased composition (polar residues); the sequence is QGGSSSGLKTSSHT. Residues 51-63 show a composition bias toward low complexity; that stretch reads SSGSGRLNSSSSG. Composition is skewed to polar residues over residues 64–80 and 95–104; these read YRQT…SPGS and EGSSSANSSP. The chain crosses the membrane as a helical; Signal-anchor for type II membrane protein span at residues 436-456; the sequence is LLGLLLAWLLLLGLLFGLIAL. The Extracellular segment spans residues 457–1495; the sequence is AEEVRKLKSR…GRRRRRSVGV (1039 aa). Disordered stretches follow at residues 532–824, 847–999, 1160–1185, 1201–1226, 1251–1278, 1295–1336, and 1396–1416; these read RGER…EKGS, DLQG…SSSQ, EFSG…SSGI, SISG…TGLL, RSYI…LVAG, GGSI…GSYG, and MSYT…PGIS. Residues 536–1482 are triple-helical region; it reads GEPGMKGDMG…KGEKGEKGEQ (947 aa). Low complexity-rich tracts occupy residues 702–711 and 761–773; these read PGAKGPAGQA and RPGA…APGK. Over residues 786-807 the composition is skewed to pro residues; the sequence is PGPPGPPGPIGPTGPPGVPGPV. A compositionally biased stretch (low complexity) spans 809–818; the sequence is PAGLPGQQGP. Composition is skewed to pro residues over residues 871–886, 901–910, 946–955, 981–993, 1167–1179, 1208–1218, and 1257–1269; these read PRGP…PPGR, PPGPPGPPGP, PPGP…PPGP, PPGP…PPGI, and PPGPPGPPGPP. A compositionally biased stretch (gly residues) spans 1296-1308; the sequence is GSIGAEGSHGGSL. Residues 1309–1336 are compositionally biased toward low complexity; it reads GASSSYGSSMSSSMSSYSASMGSDGSYG. Pro residues predominate over residues 1403 to 1413; the sequence is PPGPPGPPGPP. A glycan (N-linked (GlcNAc...) asparagine) is linked at asparagine 1424. The tract at residues 1435–1495 is disordered; the sequence is THGTVRGPPG…GRRRRRSVGV (61 aa). Basic and acidic residues predominate over residues 1472 to 1481; the sequence is PKGEKGEKGE. Positions 1483 to 1495 are nonhelical region (NC1); sequence MYSGRRRRRSVGV. Positions 1486-1495 are enriched in basic residues; that stretch reads GRRRRRSVGV.

As to quaternary structure, homotrimers of alpha 1(XVII)chains. In terms of processing, the intracellular/endo domain is disulfide-linked. Prolines at the third position of the tripeptide repeating unit (G-X-Y) are hydroxylated in some or all of the chains. Post-translationally, the ectodomain is shedded from the surface of keratinocytes resulting in a 120-kDa soluble form, also named as 120 kDa linear IgA disease antigen homolog. The shedding is mediated by membrane-bound metalloproteases. Cornea specific.

It is found in the cell junction. It localises to the hemidesmosome. Its subcellular location is the membrane. The protein localises to the secreted. The protein resides in the extracellular space. It is found in the extracellular matrix. It localises to the basement membrane. May play a role in the integrity of hemidesmosome and the attachment of basal keratinocytes to the underlying basement membrane. Functionally, the 120 kDa linear IgA disease antigen homolog is an anchoring filament component involved in dermal-epidermal cohesion. In Gallus gallus (Chicken), this protein is Collagen alpha-1(XVII) chain (COL17A1).